The sequence spans 432 residues: Adenylosuccinate synthetase (432 aa).

GTP is bound by residues 12–18 (GDEGKGK) and 40–42 (GHT). Aspartate 13 (proton acceptor) is an active-site residue. Mg(2+) is bound by residues aspartate 13 and glycine 40. IMP contacts are provided by residues 13-16 (DEGK), 38-41 (NAGH), threonine 132, arginine 146, glutamine 226, threonine 241, and arginine 305. Histidine 41 serves as the catalytic Proton donor. Residue 301–307 (TVTGRKR) coordinates substrate. Residues arginine 307, 333–335 (KLD), and 415–417 (STS) contribute to the GTP site.

Belongs to the adenylosuccinate synthetase family. In terms of assembly, homodimer. Requires Mg(2+) as cofactor.

Its subcellular location is the cytoplasm. It catalyses the reaction IMP + L-aspartate + GTP = N(6)-(1,2-dicarboxyethyl)-AMP + GDP + phosphate + 2 H(+). The protein operates within purine metabolism; AMP biosynthesis via de novo pathway; AMP from IMP: step 1/2. Plays an important role in the de novo pathway of purine nucleotide biosynthesis. Catalyzes the first committed step in the biosynthesis of AMP from IMP. The chain is Adenylosuccinate synthetase from Sinorhizobium medicae (strain WSM419) (Ensifer medicae).